Reading from the N-terminus, the 53-residue chain is UPF0391 membrane protein Bxeno_A2958 (53 aa).

The next 2 helical transmembrane spans lie at 5-25 and 30-50; these read AIVFFVIAIIAAVFGFTGIAA and IAKILFYIFLVVFVVTLLLGV.

It belongs to the UPF0391 family.

It localises to the cell membrane. This chain is UPF0391 membrane protein Bxeno_A2958, found in Paraburkholderia xenovorans (strain LB400).